The sequence spans 228 residues: Sec-independent protein translocase protein TatB (228 aa).

The chain crosses the membrane as a helical span at residues 1–21 (MFDFGLGELVFVGIIALIVLG). Disordered stretches follow at residues 138–162 (RSYASAETLGDSGQTGSTAEPAETD) and 195–228 (PVPHTTSLRKQAISRKRDLRPKSRAKPKLRVRKS). Residues 206-228 (AISRKRDLRPKSRAKPKLRVRKS) are compositionally biased toward basic residues.

The protein belongs to the TatB family. In terms of assembly, the Tat system comprises two distinct complexes: a TatABC complex, containing multiple copies of TatA, TatB and TatC subunits, and a separate TatA complex, containing only TatA subunits. Substrates initially bind to the TatABC complex, which probably triggers association of the separate TatA complex to form the active translocon.

Its subcellular location is the cell inner membrane. Its function is as follows. Part of the twin-arginine translocation (Tat) system that transports large folded proteins containing a characteristic twin-arginine motif in their signal peptide across membranes. Together with TatC, TatB is part of a receptor directly interacting with Tat signal peptides. TatB may form an oligomeric binding site that transiently accommodates folded Tat precursor proteins before their translocation. The chain is Sec-independent protein translocase protein TatB from Neisseria meningitidis serogroup A / serotype 4A (strain DSM 15465 / Z2491).